A 583-amino-acid polypeptide reads, in one-letter code: uncharacterized protein (583 aa).

This is an uncharacterized protein from Schizosaccharomyces pombe (strain 972 / ATCC 24843) (Fission yeast).